The sequence spans 155 residues: 17.3 kDa class II heat shock protein (155 aa).

The 117-residue stretch at 39-155 folds into the sHSP domain; that stretch reads DAKAMAATPA…KPKTIEVKVA (117 aa).

It belongs to the small heat shock protein (HSP20) family.

It localises to the cytoplasm. This chain is 17.3 kDa class II heat shock protein, found in Solanum peruvianum (Peruvian tomato).